A 505-amino-acid polypeptide reads, in one-letter code: tRNA-2-methylthio-N(6)-dimethylallyladenosine synthase (505 aa).

Positions 1 to 39 (MGQKAKAQAPTTHPRPHTLSSQVAPALPRRPRHAAPESL) are disordered. The 116-residue stretch at 47-162 (MKAHLITYGC…IGAALESNER (116 aa)) folds into the MTTase N-terminal domain. Residues cysteine 56, cysteine 92, cysteine 125, cysteine 194, cysteine 198, and cysteine 201 each coordinate [4Fe-4S] cluster. Positions 180 to 413 (PSGKLQAHLT…IARQKDWSAR (234 aa)) constitute a Radical SAM core domain. The 64-residue stretch at 416 to 479 (AQKVGTVQQV…PHMMYGHILG (64 aa)) folds into the TRAM domain.

This sequence belongs to the methylthiotransferase family. MiaB subfamily. In terms of assembly, monomer. It depends on [4Fe-4S] cluster as a cofactor.

The protein resides in the cytoplasm. It carries out the reaction N(6)-dimethylallyladenosine(37) in tRNA + (sulfur carrier)-SH + AH2 + 2 S-adenosyl-L-methionine = 2-methylsulfanyl-N(6)-dimethylallyladenosine(37) in tRNA + (sulfur carrier)-H + 5'-deoxyadenosine + L-methionine + A + S-adenosyl-L-homocysteine + 2 H(+). Its function is as follows. Catalyzes the methylthiolation of N6-(dimethylallyl)adenosine (i(6)A), leading to the formation of 2-methylthio-N6-(dimethylallyl)adenosine (ms(2)i(6)A) at position 37 in tRNAs that read codons beginning with uridine. This is tRNA-2-methylthio-N(6)-dimethylallyladenosine synthase from Deinococcus radiodurans (strain ATCC 13939 / DSM 20539 / JCM 16871 / CCUG 27074 / LMG 4051 / NBRC 15346 / NCIMB 9279 / VKM B-1422 / R1).